The primary structure comprises 456 residues: Cysteine synthase 2 (456 aa).

A helical membrane pass occupies residues 9–29 (VYGTVALTAAFAAGILVTLGF).

This sequence belongs to the cysteine synthase/cystathionine beta-synthase family. Pyridoxal 5'-phosphate is required as a cofactor.

The protein localises to the mitochondrion outer membrane. It carries out the reaction O-acetyl-L-serine + hydrogen sulfide = L-cysteine + acetate. Its function is as follows. Putative cysteine synthase that catalyzes the conversion of O-acetyl-L-serine (OAS) into cysteine, the last step in the cysteine biosynthesis pathway. However, in contrast to cysteine synthase cys-17, this CS-like protein may not function in cysteine biosynthesis. The protein is Cysteine synthase 2 of Neurospora crassa (strain ATCC 24698 / 74-OR23-1A / CBS 708.71 / DSM 1257 / FGSC 987).